The sequence spans 363 residues: Pyrimidine monooxygenase RutA (363 aa).

Residues 49-50 (IK), asparagine 115, glutamate 124, 140-141 (RY), and serine 190 contribute to the FMN site.

It belongs to the NtaA/SnaA/DszA monooxygenase family. RutA subfamily.

It carries out the reaction uracil + FMNH2 + NADH + O2 = (Z)-3-ureidoacrylate + FMN + NAD(+) + H2O + H(+). The catalysed reaction is thymine + FMNH2 + NADH + O2 = (Z)-2-methylureidoacrylate + FMN + NAD(+) + H2O + H(+). Its function is as follows. Catalyzes the pyrimidine ring opening between N-3 and C-4 by an unusual flavin hydroperoxide-catalyzed mechanism, adding oxygen atoms in the process to yield ureidoacrylate peracid, that immediately reacts with FMN forming ureidoacrylate and FMN-N(5)-oxide. The FMN-N(5)-oxide reacts spontaneously with NADH to produce FMN. Requires the flavin reductase RutF to regenerate FMN in vivo. This Escherichia coli O127:H6 (strain E2348/69 / EPEC) protein is Pyrimidine monooxygenase RutA.